A 564-amino-acid polypeptide reads, in one-letter code: Threonine--tRNA ligase (564 aa).

Residues 167–464 (DHRAIGKRLE…LLEKTHGNLP (298 aa)) are catalytic. Residues C260, H311, and H441 each coordinate Zn(2+).

It belongs to the class-II aminoacyl-tRNA synthetase family. In terms of assembly, homodimer. Zn(2+) serves as cofactor.

It localises to the cytoplasm. The enzyme catalyses tRNA(Thr) + L-threonine + ATP = L-threonyl-tRNA(Thr) + AMP + diphosphate + H(+). In terms of biological role, catalyzes the attachment of threonine to tRNA(Thr) in a two-step reaction: L-threonine is first activated by ATP to form Thr-AMP and then transferred to the acceptor end of tRNA(Thr). Also edits incorrectly charged L-seryl-tRNA(Thr). The protein is Threonine--tRNA ligase of Mycoplasma pneumoniae (strain ATCC 29342 / M129 / Subtype 1) (Mycoplasmoides pneumoniae).